Consider the following 81-residue polypeptide: Large ribosomal subunit protein bL31 (81 aa).

Zn(2+)-binding residues include Cys16, Cys18, Cys38, and Cys41.

This sequence belongs to the bacterial ribosomal protein bL31 family. Type A subfamily. As to quaternary structure, part of the 50S ribosomal subunit. The cofactor is Zn(2+).

In terms of biological role, binds the 23S rRNA. The sequence is that of Large ribosomal subunit protein bL31 from Mycobacterium sp. (strain JLS).